The chain runs to 256 residues: Alcohol dehydrogenase (256 aa).

12–35 is an NAD(+) binding site; the sequence is FVAGLGGIGLDTSKELVKRDLKNL. Serine 140 contacts substrate. Tyrosine 153 serves as the catalytic Proton acceptor.

This sequence belongs to the short-chain dehydrogenases/reductases (SDR) family. In terms of assembly, homodimer.

The enzyme catalyses a primary alcohol + NAD(+) = an aldehyde + NADH + H(+). It catalyses the reaction a secondary alcohol + NAD(+) = a ketone + NADH + H(+). The protein is Alcohol dehydrogenase (Adh) of Drosophila erecta (Fruit fly).